The sequence spans 251 residues: Malonyl-[acyl-carrier protein] O-methyltransferase (251 aa).

It belongs to the methyltransferase superfamily.

The catalysed reaction is malonyl-[ACP] + S-adenosyl-L-methionine = malonyl-[ACP] methyl ester + S-adenosyl-L-homocysteine. It functions in the pathway cofactor biosynthesis; biotin biosynthesis. Its function is as follows. Converts the free carboxyl group of a malonyl-thioester to its methyl ester by transfer of a methyl group from S-adenosyl-L-methionine (SAM). It allows to synthesize pimeloyl-ACP via the fatty acid synthetic pathway. The protein is Malonyl-[acyl-carrier protein] O-methyltransferase of Pseudescherichia vulneris (Escherichia vulneris).